The primary structure comprises 338 residues: Glycerol-3-phosphate dehydrogenase [NAD(P)+] (338 aa).

Ser-13, Trp-14, and Lys-108 together coordinate NADPH. The sn-glycerol 3-phosphate site is built by Lys-108, Gly-139, and Ser-141. Residue Ala-143 participates in NADPH binding. Residues Lys-194, Asp-247, Ser-257, Arg-258, and Asn-259 each coordinate sn-glycerol 3-phosphate. Lys-194 functions as the Proton acceptor in the catalytic mechanism. Arg-258 lines the NADPH pocket. The NADPH site is built by Val-282 and Glu-284.

The protein localises to the cytoplasm. The catalysed reaction is sn-glycerol 3-phosphate + NAD(+) = dihydroxyacetone phosphate + NADH + H(+). It catalyses the reaction sn-glycerol 3-phosphate + NADP(+) = dihydroxyacetone phosphate + NADPH + H(+). It functions in the pathway membrane lipid metabolism; glycerophospholipid metabolism. In terms of biological role, catalyzes the reduction of the glycolytic intermediate dihydroxyacetone phosphate (DHAP) to sn-glycerol 3-phosphate (G3P), the key precursor for phospholipid synthesis. This Streptococcus pyogenes serotype M6 (strain ATCC BAA-946 / MGAS10394) protein is Glycerol-3-phosphate dehydrogenase [NAD(P)+].